The following is a 296-amino-acid chain: Protoheme IX farnesyltransferase (296 aa).

Residues 1 to 9 (MIFKQYLQV) are Cytoplasmic-facing. A helical transmembrane segment spans residues 10–28 (TKPGIIFGNLISVIGGFLL). The Periplasmic segment spans residues 29-37 (ASKGSIDYP). Residues 38-56 (LFIYTLVGVSLVVASGCVF) form a helical membrane-spanning segment. The Cytoplasmic portion of the chain corresponds to 57–78 (NNYIDRDIDRKMERTKNRVLVK). Residues 79-97 (GLISPAVSLVYATLLGIAG) traverse the membrane as a helical segment. The Periplasmic segment spans residues 98-107 (FMLLWFGANP). A helical membrane pass occupies residues 108-126 (LACWLGVMGFVVYVGVYSL). Over 127 to 197 (YMKRHSVYGT…YQAANIPVLP (71 aa)) the chain is Cytoplasmic. Residues 198–216 (VVKGISVAKNHITLYIIAF) form a helical membrane-spanning segment. Residues 217–228 (AVATLMLSLGGY) lie on the Periplasmic side of the membrane. Residues 229 to 247 (AGYKYLVVAAAVSVWWLGM) form a helical membrane-spanning segment. The Cytoplasmic portion of the chain corresponds to 248 to 268 (ALRGYKVADDRIWARKLFGFS). A helical membrane pass occupies residues 269–287 (IIAITALSVMMSVDFMVPD). Residues 288 to 296 (SHTLLAAVW) lie on the Periplasmic side of the membrane.

Belongs to the UbiA prenyltransferase family. Protoheme IX farnesyltransferase subfamily.

It localises to the cell inner membrane. It catalyses the reaction heme b + (2E,6E)-farnesyl diphosphate + H2O = Fe(II)-heme o + diphosphate. It participates in porphyrin-containing compound metabolism; heme O biosynthesis; heme O from protoheme: step 1/1. Converts heme B (protoheme IX) to heme O by substitution of the vinyl group on carbon 2 of heme B porphyrin ring with a hydroxyethyl farnesyl side group. This Escherichia coli O1:K1 / APEC protein is Protoheme IX farnesyltransferase.